We begin with the raw amino-acid sequence, 240 residues long: Sugar fermentation stimulation protein homolog (240 aa).

It belongs to the SfsA family.

The chain is Sugar fermentation stimulation protein homolog from Crocosphaera subtropica (strain ATCC 51142 / BH68) (Cyanothece sp. (strain ATCC 51142)).